Consider the following 142-residue polypeptide: Small ribosomal subunit protein uS12 (142 aa).

The protein belongs to the universal ribosomal protein uS12 family. In terms of assembly, part of the 30S ribosomal subunit.

In terms of biological role, with S4 and S5 plays an important role in translational accuracy. Located at the interface of the 30S and 50S subunits. In Methanosarcina barkeri (strain Fusaro / DSM 804), this protein is Small ribosomal subunit protein uS12.